The chain runs to 497 residues: Galactose/methyl galactoside import ATP-binding protein MglA (497 aa).

ABC transporter domains follow at residues 6-241 and 252-497; these read LEIK…VGRS and VPGE…AKYL. 38 to 45 lines the ATP pocket; sequence GENGAGKS.

It belongs to the ABC transporter superfamily. Galactose/methyl galactoside importer (TC 3.A.1.2.3) family. In terms of assembly, the complex is composed of one ATP-binding protein (MglA), two transmembrane proteins (MglC) and a solute-binding protein (MglB).

The protein localises to the cell inner membrane. It catalyses the reaction D-galactose(out) + ATP + H2O = D-galactose(in) + ADP + phosphate + H(+). It carries out the reaction methyl beta-D-galactoside(out) + ATP + H2O = methyl beta-D-galactoside(in) + ADP + phosphate + H(+). Functionally, part of the ABC transporter complex MglABC involved in galactose/methyl galactoside import. Responsible for energy coupling to the transport system. The protein is Galactose/methyl galactoside import ATP-binding protein MglA of Treponema denticola (strain ATCC 35405 / DSM 14222 / CIP 103919 / JCM 8153 / KCTC 15104).